We begin with the raw amino-acid sequence, 162 residues long: Phospholipase A and acyltransferase 3 (162 aa).

Residues 1–133 (MRAPIPEPKP…VARSDQVRDV (133 aa)) are Cytoplasmic-facing. The region spanning 13 to 129 (LIEIFRPFYR…LRYGVARSDQ (117 aa)) is the LRAT domain. Residues His-23 and His-35 contribute to the active site. Cys-113 acts as the Acyl-thioester intermediate in catalysis. Residues 134–154 (IIAASVAGMGLAAMSLIGVMF) form a helical membrane-spanning segment. The Lumenal portion of the chain corresponds to 155-162 (SRNKRQKQ).

Belongs to the H-rev107 family. Interacts with PPP2R1A; this interaction might decrease PP2A activity. Widely expressed. Low expression, if any, in hematopoietic cells and thymus. In testis, confined to round spermatids. Expressed in normal ovarian epithelial cells. Down-regulated in some ovarian carcinomas and testicular germ cell tumors. Highly expressed in white adipose tissue.

The protein resides in the cell membrane. The protein localises to the cytoplasm. It is found in the cytosol. Its subcellular location is the perinuclear region. It localises to the peroxisome membrane. The protein resides in the mitochondrion membrane. The protein localises to the nucleus envelope. It is found in the lysosome membrane. Its subcellular location is the endoplasmic reticulum membrane. The catalysed reaction is a 1,2-diacyl-sn-glycero-3-phosphocholine + H2O = a 1-acyl-sn-glycero-3-phosphocholine + a fatty acid + H(+). It catalyses the reaction a 1,2-diacyl-sn-glycero-3-phosphocholine + H2O = a 2-acyl-sn-glycero-3-phosphocholine + a fatty acid + H(+). It carries out the reaction 1,2-dihexadecanoyl-sn-glycero-3-phosphocholine + H2O = 1-hexadecanoyl-sn-glycero-3-phosphocholine + hexadecanoate + H(+). The enzyme catalyses 1,2-dihexadecanoyl-sn-glycero-3-phosphocholine + H2O = 2-hexadecanoyl-sn-glycero-3-phosphocholine + hexadecanoate + H(+). The catalysed reaction is 1-hexadecanoyl-2-(9Z-octadecenoyl)-sn-glycero-3-phosphocholine + H2O = 2-(9Z-octadecenoyl)-sn-glycero-3-phosphocholine + hexadecanoate + H(+). It catalyses the reaction 1-hexadecanoyl-2-(9Z-octadecenoyl)-sn-glycero-3-phosphocholine + H2O = 1-hexadecanoyl-sn-glycero-3-phosphocholine + (9Z)-octadecenoate + H(+). It carries out the reaction 1-hexadecanoyl-2-(5Z,8Z,11Z,14Z-eicosatetraenoyl)-sn-glycero-3-phosphocholine + H2O = 1-hexadecanoyl-sn-glycero-3-phosphocholine + (5Z,8Z,11Z,14Z)-eicosatetraenoate + H(+). The enzyme catalyses 1-hexadecanoyl-2-(5Z,8Z,11Z,14Z-eicosatetraenoyl)-sn-glycero-3-phosphocholine + H2O = 2-(5Z,8Z,11Z,14Z)-eicosatetraenoyl-sn-glycero-3-phosphocholine + hexadecanoate + H(+). The catalysed reaction is 1-hexadecanoyl-2-(9Z,12Z-octadecadienoyl)-sn-glycero-3-phosphoethanolamine + H2O = 1-hexadecanoyl-sn-glycero-3-phosphoethanolamine + (9Z,12Z)-octadecadienoate + H(+). It catalyses the reaction 1-hexadecanoyl-2-(9Z,12Z-octadecadienoyl)-sn-glycero-3-phosphoethanolamine + H2O = 2-(9Z,12Z)-octadecadienoyl-sn-glycero-3-phosphoethanolamine + hexadecanoate + H(+). It carries out the reaction 1-hexadecanoyl-2-(5Z,8Z,11Z,14Z-eicosatetraenoyl)-sn-glycero-3-phosphoethanolamine + H2O = 1-hexadecanoyl-sn-glycero-3-phosphoethanolamine + (5Z,8Z,11Z,14Z)-eicosatetraenoate + H(+). The enzyme catalyses 1-hexadecanoyl-2-(5Z,8Z,11Z,14Z-eicosatetraenoyl)-sn-glycero-3-phosphoethanolamine + H2O = 2-(5Z,8Z,11Z,14Z)-eicosatetraenoyl-sn-glycero-3-phosphoethanolamine + hexadecanoate + H(+). The catalysed reaction is 1-hexanoyl-2-acyl-sn-glycero-3-phosphocholine + H2O = hexanoate + a 2-acyl-sn-glycero-3-phosphocholine + H(+). It catalyses the reaction 1-hexanoyl-2-acyl-sn-glycero-3-phosphocholine + H2O = 1-hexanoyl-sn-glycero-3-phosphocholine + a fatty acid + H(+). It carries out the reaction 1,2-diheptadecanoyl-sn-glycero-3-phosphoethanolamine + 1-(9Z-octadecenoyl)-2-hexadecanoyl-sn-glycero-3-phosphocholine = 1,2-diheptadecanoyl-sn-glycero-3-phospho-N-hexadecanoyl-ethanolamine + 1-(9Z-octadecenoyl)-sn-glycero-3-phosphocholine + H(+). The enzyme catalyses 1,2-diheptadecanoyl-sn-glycero-3-phosphoethanolamine + 1-(9Z-octadecenoyl)-2-hexadecanoyl-sn-glycero-3-phosphocholine = 1,2-diheptadecanoyl-sn-glycero-3-phospho-N-(9Z-octadecenoyl)-ethanolamine + 2-hexadecanoyl-sn-glycero-3-phosphocholine + H(+). The catalysed reaction is 1,2-dihexanoyl-sn-glycero-3-phosphoethanolamine + 2-heptanoyl-sn-glycero-3-phosphocholine = hexanoyl-sn-glycero-3-phosphoethanolamine + 1-hexanoyl-2-heptanoyl-sn-glycero-3-phosphocholine. It catalyses the reaction 1-hexadecanoyl-2-octadecanoyl-sn-glycero-3-phosphocholine + H2O = octadecanoate + 1-hexadecanoyl-sn-glycero-3-phosphocholine + H(+). It carries out the reaction 1-hexadecanoyl-2-octadecanoyl-sn-glycero-3-phosphocholine + H2O = 2-octadecanoyl-sn-glycero-3-phosphocholine + hexadecanoate + H(+). The enzyme catalyses 1-octadecanoyl-2-hexadecanoyl-sn-glycero-3-phosphocholine + H2O = 1-octadecanoyl-sn-glycero-3-phosphocholine + hexadecanoate + H(+). The catalysed reaction is 1-octadecanoyl-2-hexadecanoyl-sn-glycero-3-phosphocholine + H2O = 2-hexadecanoyl-sn-glycero-3-phosphocholine + octadecanoate + H(+). It catalyses the reaction 1-hexadecanoyl-2-(9Z,12Z-octadecadienoyl)-sn-glycero-3-phosphocholine + H2O = (9Z,12Z)-octadecadienoate + 1-hexadecanoyl-sn-glycero-3-phosphocholine + H(+). It carries out the reaction 1-hexadecanoyl-2-(9Z,12Z-octadecadienoyl)-sn-glycero-3-phosphocholine + H2O = 2-(9Z,12Z-octadecadienoyl)-sn-glycero-3-phosphocholine + hexadecanoate + H(+). The enzyme catalyses 1,2-di-(9Z-octadecenoyl)-sn-glycero-3-phosphocholine + H2O = 2-(9Z-octadecenoyl)-sn-glycero-3-phosphocholine + (9Z)-octadecenoate + H(+). The catalysed reaction is 1,2-dihexadecanoyl-sn-glycero-3-phosphocholine + H2O = hexadecanoyl-sn-glycero-3-phosphocholine + hexadecanoate + H(+). It catalyses the reaction 1,2-di-(9Z-octadecenoyl)-sn-glycero-3-phosphocholine + H2O = 1-(9Z-octadecenoyl)-sn-glycero-3-phosphocholine + (9Z)-octadecenoate + H(+). It carries out the reaction 1,2-di-(9Z-octadecenoyl)-sn-glycero-3-phosphoethanolamine + 1,2-dihexadecanoyl-sn-glycero-3-phosphocholine = hexadecanoyl-sn-glycero-3-phosphocholine + N-hexadecanoyl-1,2-di-(9Z-octadecenoyl)-sn-glycero-3-phosphoethanolamine + H(+). The enzyme catalyses 1,2-di-(9Z,12Z-octadecadienoyl)-sn-glycero-3-phosphocholine + H2O = 1-(9Z,12Z)-octadecadienoyl-sn-glycero-3-phosphocholine + (9Z,12Z)-octadecadienoate + H(+). Functionally, exhibits both phospholipase A1/2 and acyltransferase activities. Shows phospholipase A1 (PLA1) and A2 (PLA2) activity, catalyzing the calcium-independent release of fatty acids from the sn-1 or sn-2 position of glycerophospholipids. For most substrates, PLA1 activity is much higher than PLA2 activity. Shows O-acyltransferase activity,catalyzing the transfer of a fatty acyl group from glycerophospholipid to the hydroxyl group of lysophospholipid. Shows N-acyltransferase activity, catalyzing the calcium-independent transfer of a fatty acyl group at the sn-1 position of phosphatidylcholine (PC) and other glycerophospholipids to the primary amine of phosphatidylethanolamine (PE), forming N-acylphosphatidylethanolamine (NAPE), which serves as precursor for N-acylethanolamines (NAEs). Exhibits high N-acyltransferase activity and low phospholipase A1/2 activity. Required for complete organelle rupture and degradation that occur during eye lens terminal differentiation, when fiber cells that compose the lens degrade all membrane-bound organelles in order to provide lens with transparency to allow the passage of light. Organelle membrane degradation is probably catalyzed by the phospholipase activity. In terms of biological role, (Microbial infection) Acts as a host factor for picornaviruses: required during early infection to promote viral genome release into the cytoplasm. May act as a cellular sensor of membrane damage at sites of virus entry, which relocalizes to sites of membrane rupture upon virus unfection. Facilitates safe passage of the RNA away from LGALS8, enabling viral genome translation by host ribosome. May also be involved in initiating pore formation, increasing pore size or in maintaining pores for genome delivery. The lipid-modifying enzyme activity is required for this process. This Homo sapiens (Human) protein is Phospholipase A and acyltransferase 3.